We begin with the raw amino-acid sequence, 588 residues long: Protein gamma response 1 (588 aa).

Coiled coils occupy residues 64–104 (AACD…LGKT) and 164–281 (SEVK…KTVV). Basic and acidic residues-rich tracts occupy residues 377–389 (KHSE…DKVR), 465–484 (NVKR…KKDD), and 508–525 (TSKK…KAER). Disordered regions lie at residues 377 to 398 (KHSE…SGNN) and 417 to 525 (PIVR…KAER).

Basal levels in mitotically dividing cells (meristems), and high levels in endoreduplicating cells (stipules, trichomes) (at protein level).

The protein resides in the nucleus. Its function is as follows. Seems to mediate cell cycle arrest before mitosis in response to DNA damage. Is probably also involved in the transition from mitosis to endoreduplication. The chain is Protein gamma response 1 (GR1) from Arabidopsis thaliana (Mouse-ear cress).